The chain runs to 352 residues: Cuticle collagen dpy-17 (352 aa).

The signal sequence occupies residues 1 to 29 (MSVFAGYAACTLGAVSMLLCVSLVPQVYQ). The segment at 61 to 64 (RVRR) is furin-like endopeptidase recognition region. Disordered regions lie at residues 73 to 143 (GGYG…GPGD) and 156 to 352 (GPAG…GYRN). A compositionally biased stretch (gly residues) spans 87-97 (GPHGGFPGGPQ). Triple-helical region stretches follow at residues 156-182 (GPAG…DGED), 202-264 (GPQG…DVEH), 267-290 (GLPG…QGDR), and 294-329 (GIAG…PGQD). The 58-residue stretch at 202–259 (GPQGPPGSQGKPGARGMRGARGQAAMPGRDGSPGMPGSLGPIGPPGAAGEEGPTGEPG) folds into the Collagen-like domain. Residues 207–259 (PGSQGKPGARGMRGARGQAAMPGRDGSPGMPGSLGPIGPPGAAGEEGPTGEPG) are compositionally biased toward low complexity. Polar residues predominate over residues 337-352 (QRNTNAAVSGNQGYRN).

It belongs to the cuticular collagen family. Collagen polypeptide chains are complexed within the cuticle by disulfide bonds and other types of covalent cross-links.

The protein resides in the secreted. It localises to the extracellular space. In terms of biological role, secreted collagen that forms part of the nematode cuticle, which functions as an exoskeleton and a barrier to protect the worm from its environment. Secretion and subsequent incorporation into the cuticle is likely mediated by bli-4, which probably cleaves at the N-terminal consensus furin cleavage site. This chain is Cuticle collagen dpy-17, found in Caenorhabditis elegans.